We begin with the raw amino-acid sequence, 463 residues long: Chaperone SurA (463 aa).

A signal peptide spans 1 to 25; sequence MTKPFSVVLASLLAITSTVSPLASA. 2 PpiC domains span residues 174-276 and 289-388; these read GSQY…KLVE and VTEY…QRVG. Disordered regions lie at residues 328–348 and 432–463; these read QATA…GDLG and RTGD…KPTR. A compositionally biased stretch (low complexity) spans 440 to 452; sequence NATAAPAKSADPA. A compositionally biased stretch (pro residues) spans 453-463; sequence APSPPPAKPTR.

It is found in the periplasm. It carries out the reaction [protein]-peptidylproline (omega=180) = [protein]-peptidylproline (omega=0). In terms of biological role, chaperone involved in the correct folding and assembly of outer membrane proteins. Recognizes specific patterns of aromatic residues and the orientation of their side chains, which are found more frequently in integral outer membrane proteins. May act in both early periplasmic and late outer membrane-associated steps of protein maturation. The protein is Chaperone SurA of Xanthomonas euvesicatoria pv. vesicatoria (strain 85-10) (Xanthomonas campestris pv. vesicatoria).